A 697-amino-acid polypeptide reads, in one-letter code: tRNA 5-methylaminomethyl-2-thiouridine biosynthesis bifunctional protein MnmC (697 aa).

The segment at 1–269 (MNKTPLLSVS…LRQQLQQQFA (269 aa)) is tRNA (mnm(5)s(2)U34)-methyltransferase. Positions 287 to 697 (IGGGIASASL…RKLLKGKALM (411 aa)) are FAD-dependent cmnm(5)s(2)U34 oxidoreductase.

This sequence in the N-terminal section; belongs to the methyltransferase superfamily. tRNA (mnm(5)s(2)U34)-methyltransferase family. It in the C-terminal section; belongs to the DAO family. FAD serves as cofactor.

Its subcellular location is the cytoplasm. It carries out the reaction 5-aminomethyl-2-thiouridine(34) in tRNA + S-adenosyl-L-methionine = 5-methylaminomethyl-2-thiouridine(34) in tRNA + S-adenosyl-L-homocysteine + H(+). Catalyzes the last two steps in the biosynthesis of 5-methylaminomethyl-2-thiouridine (mnm(5)s(2)U) at the wobble position (U34) in tRNA. Catalyzes the FAD-dependent demodification of cmnm(5)s(2)U34 to nm(5)s(2)U34, followed by the transfer of a methyl group from S-adenosyl-L-methionine to nm(5)s(2)U34, to form mnm(5)s(2)U34. The sequence is that of tRNA 5-methylaminomethyl-2-thiouridine biosynthesis bifunctional protein MnmC from Shewanella frigidimarina (strain NCIMB 400).